The primary structure comprises 347 residues: SCA7 domain-containing protein SELMODRAFT_439258 (347 aa).

The N-terminal stretch at 1-13 (MCFFLSSLCPVVA) is a signal peptide. The interval 77-106 (RAEVGGTGPKVGRPRKLSVYNPREMSDGNP) is disordered. The SCA7 domain occupies 134–201 (QHLPFTVDDL…NNSRKSQQAD (68 aa)).

The protein is SCA7 domain-containing protein SELMODRAFT_439258 of Selaginella moellendorffii (Spikemoss).